The sequence spans 213 residues: FMN-dependent NADH:quinone oxidoreductase (213 aa).

This sequence belongs to the azoreductase type 1 family. As to quaternary structure, homodimer. It depends on FMN as a cofactor.

It carries out the reaction 2 a quinone + NADH + H(+) = 2 a 1,4-benzosemiquinone + NAD(+). The catalysed reaction is N,N-dimethyl-1,4-phenylenediamine + anthranilate + 2 NAD(+) = 2-(4-dimethylaminophenyl)diazenylbenzoate + 2 NADH + 2 H(+). In terms of biological role, quinone reductase that provides resistance to thiol-specific stress caused by electrophilic quinones. Also exhibits azoreductase activity. Catalyzes the reductive cleavage of the azo bond in aromatic azo compounds to the corresponding amines. In Streptococcus agalactiae serotype III (strain NEM316), this protein is FMN-dependent NADH:quinone oxidoreductase.